A 202-amino-acid polypeptide reads, in one-letter code: Lipid A acyltransferase PagP (202 aa).

The N-terminal stretch at 1 to 25 is a signal peptide; that stretch reads MNYKDIINACILSGVFLLHSPSALA. Active-site residues include H74, D117, and S118.

This sequence belongs to the lipid A palmitoyltransferase family. Homodimer.

The protein localises to the cell outer membrane. It catalyses the reaction a lipid A + a 1,2-diacyl-sn-glycero-3-phosphocholine = a hepta-acyl lipid A + a 2-acyl-sn-glycero-3-phosphocholine. It carries out the reaction a lipid IVA + a 1,2-diacyl-sn-glycero-3-phosphocholine = a lipid IVB + a 2-acyl-sn-glycero-3-phosphocholine. The enzyme catalyses a lipid IIA + a 1,2-diacyl-sn-glycero-3-phosphocholine = a lipid IIB + a 2-acyl-sn-glycero-3-phosphocholine. In terms of biological role, transfers a fatty acid residue from the sn-1 position of a phospholipid to the N-linked hydroxyfatty acid chain on the proximal unit of lipid A or its precursors. This is Lipid A acyltransferase PagP from Yersinia pseudotuberculosis serotype IB (strain PB1/+).